The chain runs to 341 residues: Nucleoid-associated protein Sden_2335 (341 aa).

Belongs to the YejK family.

It is found in the cytoplasm. The protein resides in the nucleoid. The polypeptide is Nucleoid-associated protein Sden_2335 (Shewanella denitrificans (strain OS217 / ATCC BAA-1090 / DSM 15013)).